Reading from the N-terminus, the 348-residue chain is NADH-ubiquinone oxidoreductase chain 2 (348 aa).

9 helical membrane passes run 3-23 (PYVL…TFAS), 60-80 (FLTQ…NAWM), 96-116 (TMFM…FWMP), 149-169 (IDPL…GWGG), 178-197 (ILAY…IQYA), 202-219 (LLAL…FLTL), 246-266 (LVLL…KWLI), 274-294 (DLPI…YFYL), and 326-346 (LALF…ILTL).

Belongs to the complex I subunit 2 family.

The protein resides in the mitochondrion inner membrane. It carries out the reaction a ubiquinone + NADH + 5 H(+)(in) = a ubiquinol + NAD(+) + 4 H(+)(out). In terms of biological role, core subunit of the mitochondrial membrane respiratory chain NADH dehydrogenase (Complex I) that is believed to belong to the minimal assembly required for catalysis. Complex I functions in the transfer of electrons from NADH to the respiratory chain. The immediate electron acceptor for the enzyme is believed to be ubiquinone. The sequence is that of NADH-ubiquinone oxidoreductase chain 2 (MT-ND2) from Carassius auratus (Goldfish).